A 507-amino-acid chain; its full sequence is Congo red hypersensitive protein 1 (507 aa).

The first 22 residues, 1–22 (MKVLDLLTVLSASSLLSTFAAA), serve as a signal peptide directing secretion. Positions 34-260 (ASSTASCNPL…KVIVTDYSTG (227 aa)) constitute a GH16 domain. Cys40 and Cys48 form a disulfide bridge. Asn117 carries an N-linked (GlcNAc...) asparagine glycan. Glu134 serves as the catalytic Nucleophile. Catalysis depends on Glu138, which acts as the Proton donor. Glu138 lines the chitin pocket. N-linked (GlcNAc...) asparagine glycans are attached at residues Asn177 and Asn201. 2 residues coordinate chitin: Trp219 and Thr230. Disordered stretches follow at residues 329–368 (SSSASSTVSSSVSSTVSSSSSVSSSSSTSPSSSTATSSKT) and 381–478 (SSFE…TNSV). Composition is skewed to low complexity over residues 381–439 (SSFE…PVQD) and 451–477 (TSSTTQISSKYTSTIQSSSSEASSTNS). Asn482 is lipidated: GPI-anchor amidated asparagine. Residues 483–507 (GADLAQSLPREGKLFSVLVALLALL) constitute a propeptide, removed in mature form.

It belongs to the glycosyl hydrolase 16 family. CRH1 subfamily. The GPI-anchor is attached to the protein in the endoplasmic reticulum and serves to target the protein to the cell surface. There, the glucosamine-inositol phospholipid moiety is cleaved off and the GPI-modified mannoprotein is covalently attached via its lipidless GPI glycan remnant to the 1,6-beta-glucan of the outer cell wall layer.

It localises to the secreted. The protein resides in the cell wall. It is found in the membrane. It carries out the reaction Random endo-hydrolysis of N-acetyl-beta-D-glucosaminide (1-&gt;4)-beta-linkages in chitin and chitodextrins.. In terms of biological role, dual chitinase/transglycosylase that plays a role in cell wall architecture. Chitinase and transglycosylase activities are coupled. Required for the polysaccharide cross-linking at the septa and the cell wall. More specifically, transfers chitin to both beta(1-3)- and beta(1-6)glucan in the cell wall. The minimal number of intact hexopyranose units required in the molecule of the acceptor oligosaccharide is two and the effectivity of the acceptor increased with the increasing length of its oligosaccharide chain. This is Congo red hypersensitive protein 1 from Saccharomyces cerevisiae (strain ATCC 204508 / S288c) (Baker's yeast).